Reading from the N-terminus, the 425-residue chain is Enolase (425 aa).

Gln163 lines the (2R)-2-phosphoglycerate pocket. Residue Glu205 is the Proton donor of the active site. The Mg(2+) site is built by Asp242, Glu286, and Asp313. 4 residues coordinate (2R)-2-phosphoglycerate: Lys338, Arg367, Ser368, and Lys389. The active-site Proton acceptor is Lys338.

The protein belongs to the enolase family. Mg(2+) is required as a cofactor.

It is found in the cytoplasm. It localises to the secreted. The protein resides in the cell surface. It carries out the reaction (2R)-2-phosphoglycerate = phosphoenolpyruvate + H2O. It participates in carbohydrate degradation; glycolysis; pyruvate from D-glyceraldehyde 3-phosphate: step 4/5. Its function is as follows. Catalyzes the reversible conversion of 2-phosphoglycerate (2-PG) into phosphoenolpyruvate (PEP). It is essential for the degradation of carbohydrates via glycolysis. The sequence is that of Enolase from Lactobacillus delbrueckii subsp. bulgaricus (strain ATCC 11842 / DSM 20081 / BCRC 10696 / JCM 1002 / NBRC 13953 / NCIMB 11778 / NCTC 12712 / WDCM 00102 / Lb 14).